A 185-amino-acid chain; its full sequence is Elongation factor P (185 aa).

It belongs to the elongation factor P family.

The protein localises to the cytoplasm. It participates in protein biosynthesis; polypeptide chain elongation. Its function is as follows. Involved in peptide bond synthesis. Stimulates efficient translation and peptide-bond synthesis on native or reconstituted 70S ribosomes in vitro. Probably functions indirectly by altering the affinity of the ribosome for aminoacyl-tRNA, thus increasing their reactivity as acceptors for peptidyl transferase. This is Elongation factor P (efp) from Nostoc sp. (strain PCC 7120 / SAG 25.82 / UTEX 2576).